The chain runs to 287 residues: UTP--glucose-1-phosphate uridylyltransferase 1 (287 aa).

Belongs to the UDPGP type 2 family.

It carries out the reaction alpha-D-glucose 1-phosphate + UTP + H(+) = UDP-alpha-D-glucose + diphosphate. Its pathway is glycolipid metabolism; diglucosyl-diacylglycerol biosynthesis. Catalyzes the formation of UDP-glucose from glucose-1-phosphate and UTP. This is an intermediate step in the biosynthesis of diglucosyl-diacylglycerol (Glc2-DAG), i.e. a glycolipid found in the membrane, which is also used as a membrane anchor for lipoteichoic acid (LTA). In Staphylococcus saprophyticus subsp. saprophyticus (strain ATCC 15305 / DSM 20229 / NCIMB 8711 / NCTC 7292 / S-41), this protein is UTP--glucose-1-phosphate uridylyltransferase 1 (gtaB1).